The following is a 938-amino-acid chain: Isoleucine--tRNA ligase (938 aa).

Residues 58-68 (PYANGNIHMGH) carry the 'HIGH' region motif. Glutamate 566 is a binding site for L-isoleucyl-5'-AMP. The 'KMSKS' region motif lies at 607–611 (KMSKS). Lysine 610 is an ATP binding site. Zn(2+) contacts are provided by cysteine 906, cysteine 909, cysteine 926, and cysteine 929.

It belongs to the class-I aminoacyl-tRNA synthetase family. IleS type 1 subfamily. In terms of assembly, monomer. Zn(2+) is required as a cofactor.

It localises to the cytoplasm. The enzyme catalyses tRNA(Ile) + L-isoleucine + ATP = L-isoleucyl-tRNA(Ile) + AMP + diphosphate. Its function is as follows. Catalyzes the attachment of isoleucine to tRNA(Ile). As IleRS can inadvertently accommodate and process structurally similar amino acids such as valine, to avoid such errors it has two additional distinct tRNA(Ile)-dependent editing activities. One activity is designated as 'pretransfer' editing and involves the hydrolysis of activated Val-AMP. The other activity is designated 'posttransfer' editing and involves deacylation of mischarged Val-tRNA(Ile). The chain is Isoleucine--tRNA ligase from Nitratidesulfovibrio vulgaris (strain DP4) (Desulfovibrio vulgaris).